Here is a 540-residue protein sequence, read N- to C-terminus: Arylsulfatase K (540 aa).

Positions 1 to 22 (MLLLWVSVVAASALAAPAPGAD) are cleaved as a signal peptide. Ca(2+) is bound by residues Asp-44 and Cys-84. The active-site Nucleophile is Cys-84. Position 84 is a 3-oxoalanine (Cys) (Cys-84). N-linked (GlcNAc...) asparagine glycosylation is present at Asn-112. Lys-132 is a substrate binding site. N-linked (GlcNAc...) asparagine glycosylation is present at Asn-197. His-255 contacts substrate. Asn-266 is a glycosylation site (N-linked (GlcNAc...) asparagine). 2 residues coordinate Ca(2+): Asp-317 and His-318. 3 N-linked (GlcNAc...) asparagine glycosylation sites follow: Asn-379, Asn-417, and Asn-502.

It belongs to the sulfatase family. The cofactor is Ca(2+). Post-translationally, the conversion to 3-oxoalanine (also known as C-formylglycine, FGly), of a serine or cysteine residue in prokaryotes and of a cysteine residue in eukaryotes, is critical for catalytic activity. In terms of processing, the 75-kDa precursor undergoes proteolytic processing to yield a 23 kDa form. N-glycosylated with both high mannose and complex type sugars.

The protein resides in the secreted. Its subcellular location is the lysosome. It catalyses the reaction an aryl sulfate + H2O = a phenol + sulfate + H(+). The catalysed reaction is Hydrolysis of the 2-sulfate groups of the 2-O-sulfo-D-glucuronate residues of chondroitin sulfate, heparin and heparitin sulfate.. In terms of biological role, catalyzes the hydrolysis of pseudosubstrates such as p-nitrocatechol sulfate and p-nitrophenyl sulfate. Catalyzes the hydrolysis of the 2-sulfate groups of the 2-O-sulfo-D-glucuronate residues of chondroitin sulfate, heparin and heparitin sulfate. Acts selectively on 2-sulfoglucuronate and lacks activity against 2-sulfoiduronate. The chain is Arylsulfatase K (ARSK) from Bos taurus (Bovine).